Consider the following 125-residue polypeptide: Protein ApaG (125 aa).

Positions 1 to 125 (MINAPRVCVQ…FRLAIPSLIH (125 aa)) constitute an ApaG domain.

The polypeptide is Protein ApaG (Pectobacterium atrosepticum (strain SCRI 1043 / ATCC BAA-672) (Erwinia carotovora subsp. atroseptica)).